The following is a 432-amino-acid chain: D-amino acid dehydrogenase (432 aa).

FAD is bound at residue 3 to 17; sequence VVILGSGVVGVTSAW.

The protein belongs to the DadA oxidoreductase family. It depends on FAD as a cofactor.

It catalyses the reaction a D-alpha-amino acid + A + H2O = a 2-oxocarboxylate + AH2 + NH4(+). The protein operates within amino-acid degradation; D-alanine degradation; NH(3) and pyruvate from D-alanine: step 1/1. Its function is as follows. Oxidative deamination of D-amino acids. This Salmonella choleraesuis (strain SC-B67) protein is D-amino acid dehydrogenase.